Reading from the N-terminus, the 297-residue chain is 33 kDa chaperonin (297 aa).

Cystine bridges form between Cys232-Cys234 and Cys266-Cys269.

This sequence belongs to the HSP33 family. Post-translationally, under oxidizing conditions two disulfide bonds are formed involving the reactive cysteines. Under reducing conditions zinc is bound to the reactive cysteines and the protein is inactive.

Its subcellular location is the cytoplasm. Functionally, redox regulated molecular chaperone. Protects both thermally unfolding and oxidatively damaged proteins from irreversible aggregation. Plays an important role in the bacterial defense system toward oxidative stress. The polypeptide is 33 kDa chaperonin (Pseudomonas aeruginosa (strain UCBPP-PA14)).